The following is a 155-amino-acid chain: Large ribosomal subunit protein uL22c (155 aa).

This sequence belongs to the universal ribosomal protein uL22 family. In terms of assembly, part of the 50S ribosomal subunit.

The protein resides in the plastid. It localises to the chloroplast. This protein binds specifically to 23S rRNA. Functionally, the globular domain of the protein is located near the polypeptide exit tunnel on the outside of the subunit, while an extended beta-hairpin is found that lines the wall of the exit tunnel in the center of the 70S ribosome. The chain is Large ribosomal subunit protein uL22c (rpl22) from Nicotiana sylvestris (Wood tobacco).